We begin with the raw amino-acid sequence, 59 residues long: Temporin-HN2 (59 aa).

Residues 1 to 22 form the signal peptide; that stretch reads MFTLKKSLLLLLFLGTINLSLS. A coiled-coil region spans residues 16–44; that stretch reads TINLSLSEQERDAKEERRDEMDVEVEKRN. Residues 23–41 constitute a propeptide that is removed on maturation; that stretch reads EQERDAKEERRDEMDVEVE. Residue Leu57 is modified to Leucine amide.

In terms of tissue distribution, expressed by the skin glands.

The protein localises to the secreted. In terms of biological role, has antimicrobial activity against some Gram-positive bacteria and fungi but has no activity against a range of Gram-negative bacteria except P.faecalis. Active against the Gram-positive bacteria S.aureus ATCC 25923 (MIC=4.8 uM), S.carnosus KHS (MIC=19 uM), B.licheniformis X39 (MIC=19 uM) and R.rhodochrous X15 (MIC=2.4 uM) but is inactive against E.faecium 091299 and E.faecalis 981. Has a less potent antimicrobial activity against the Gram-negative bacterium P.faecalis X29 (MIC=37.5 uM) and is inactive against E.coli, P.aeruginosa and S.typhi. Has antifungal activity against C.albicans ATCC 2002 (MIC=9.5 uM) and is also active against the slime mold 090223 (MIC=9.5 uM). Has extremely low hemolytic activity against human erythrocytes (LC(50)=300 uM). The sequence is that of Temporin-HN2 from Odorrana hainanensis (Odor frog).